The following is a 151-amino-acid chain: RNA polymerase-binding transcription factor DksA (151 aa).

Residues Cys114, Cys117, Cys135, and Cys138 each coordinate Zn(2+). Residues Cys114 to Cys138 form a dksA C4-type zinc finger.

Belongs to the DksA family. Interacts directly with the RNA polymerase.

Its subcellular location is the cytoplasm. Functionally, transcription factor that acts by binding directly to the RNA polymerase (RNAP). Required for negative regulation of rRNA expression and positive regulation of several amino acid biosynthesis promoters. Also required for regulation of fis expression. In Buchnera aphidicola subsp. Acyrthosiphon pisum (strain APS) (Acyrthosiphon pisum symbiotic bacterium), this protein is RNA polymerase-binding transcription factor DksA.